Consider the following 482-residue polypeptide: NADH-quinone oxidoreductase subunit N (482 aa).

14 helical membrane-spanning segments follow: residues 11-31 (AVPE…GVFI), 37-57 (IPYY…WYIF), 77-97 (RFSV…FIYA), 106-126 (IPHT…VALV), 131-151 (LLTV…MVAL), 166-186 (FVIG…IFGA), 208-228 (LILV…LGTA), 255-275 (IAAY…LHVQ), 279-299 (MLIV…IVQS), 304-324 (MLAY…LCGT), 332-352 (MFYT…VVLM), 376-396 (AFMM…VGFI), 404-424 (ALIQ…AIVG), and 462-482 (LAVL…HLAF).

It belongs to the complex I subunit 2 family. NDH-1 is composed of 14 different subunits. Subunits NuoA, H, J, K, L, M, N constitute the membrane sector of the complex.

It localises to the cell inner membrane. The catalysed reaction is a quinone + NADH + 5 H(+)(in) = a quinol + NAD(+) + 4 H(+)(out). In terms of biological role, NDH-1 shuttles electrons from NADH, via FMN and iron-sulfur (Fe-S) centers, to quinones in the respiratory chain. The immediate electron acceptor for the enzyme in this species is believed to be ubiquinone. Couples the redox reaction to proton translocation (for every two electrons transferred, four hydrogen ions are translocated across the cytoplasmic membrane), and thus conserves the redox energy in a proton gradient. The chain is NADH-quinone oxidoreductase subunit N from Coxiella burnetii (strain RSA 493 / Nine Mile phase I).